Consider the following 643-residue polypeptide: Immediate-early phosphoprotein 57 (643 aa).

2 disordered regions span residues 1-180 and 194-329; these read MAQK…GGCA and TGWG…QCPP. Over residues 24 to 52 the composition is skewed to acidic residues; sequence LDFSESEEEEEEEESSSESESDEDSDMEV. Low complexity-rich tracts occupy residues 57–71 and 83–100; these read QEAG…QPQQ and QQPQ…QQQR. Over residues 103 to 113 the composition is skewed to basic and acidic residues; the sequence is KRGEESGDARP. The segment covering 162–171 has biased composition (low complexity); the sequence is QQPQSQAAQP. Residues 215-241 are compositionally biased toward basic and acidic residues; sequence RRGDEDRRSGRDRRRREGRERDRESRS. Over residues 284–297 the composition is skewed to low complexity; that stretch reads AGPSQAQAAQAARA. Residues 298–307 show a composition bias toward basic and acidic residues; the sequence is PRQEQGERRQ. The segment covering 320–329 has biased composition (pro residues); that stretch reads QQCPPQQCPP.

Belongs to the herpesviridae UL69 family.

The sequence is that of Immediate-early phosphoprotein 57 (57) from Equus caballus (Horse).